The primary structure comprises 530 residues: Ubiquitin carboxyl-terminal hydrolase 17-like protein 13 (530 aa).

The USP domain maps to 80–375 (AGLQNMGNTC…QAYVLFYIQK (296 aa)). Catalysis depends on C89, which acts as the Nucleophile. The Proton acceptor role is filled by H334. Composition is skewed to basic and acidic residues over residues 382-392 (SESVSRGREPR) and 398-412 (DTDR…KRDH). Disordered regions lie at residues 382 to 412 (SESV…KRDH) and 477 to 530 (NHHP…LVCQ). Over residues 493-505 (TPTHQESMNTGTL) the composition is skewed to polar residues. Residues 510–524 (GRARRSKGKNKHSKR) are compositionally biased toward basic residues.

The protein belongs to the peptidase C19 family. USP17 subfamily.

It localises to the nucleus. The protein localises to the endoplasmic reticulum. The catalysed reaction is Thiol-dependent hydrolysis of ester, thioester, amide, peptide and isopeptide bonds formed by the C-terminal Gly of ubiquitin (a 76-residue protein attached to proteins as an intracellular targeting signal).. In terms of biological role, deubiquitinating enzyme that removes conjugated ubiquitin from specific proteins to regulate different cellular processes that may include cell proliferation, progression through the cell cycle, apoptosis, cell migration, and the cellular response to viral infection. This chain is Ubiquitin carboxyl-terminal hydrolase 17-like protein 13 (USP17L13), found in Homo sapiens (Human).